Consider the following 468-residue polypeptide: Ribulose bisphosphate carboxylase large chain (468 aa).

At Lys-5 the chain carries N6,N6,N6-trimethyllysine. Asn-114 and Thr-164 together coordinate substrate. Lys-166 functions as the Proton acceptor in the catalytic mechanism. Substrate is bound at residue Lys-168. Mg(2+) is bound by residues Lys-192, Asp-194, and Glu-195. N6-carboxylysine is present on Lys-192. Residue His-285 is the Proton acceptor of the active site. Arg-286, His-318, and Ser-370 together coordinate substrate.

This sequence belongs to the RuBisCO large chain family. Type I subfamily. Heterohexadecamer of 8 large chains and 8 small chains; disulfide-linked. The disulfide link is formed within the large subunit homodimers. Mg(2+) serves as cofactor. In terms of processing, the disulfide bond which can form in the large chain dimeric partners within the hexadecamer appears to be associated with oxidative stress and protein turnover.

Its subcellular location is the plastid. The protein localises to the chloroplast. It catalyses the reaction 2 (2R)-3-phosphoglycerate + 2 H(+) = D-ribulose 1,5-bisphosphate + CO2 + H2O. The enzyme catalyses D-ribulose 1,5-bisphosphate + O2 = 2-phosphoglycolate + (2R)-3-phosphoglycerate + 2 H(+). In terms of biological role, ruBisCO catalyzes two reactions: the carboxylation of D-ribulose 1,5-bisphosphate, the primary event in carbon dioxide fixation, as well as the oxidative fragmentation of the pentose substrate in the photorespiration process. Both reactions occur simultaneously and in competition at the same active site. The chain is Ribulose bisphosphate carboxylase large chain from Tecoma stans (Yellow bells).